Here is a 451-residue protein sequence, read N- to C-terminus: MATTAQYLPRGPGGGAGGTGPLMHPDAAAAAAAAAAAERLHAGAAYREVQKLMHHEWLGAGAGHPVGLAHPQWLPTGGGGGGDWAGGPHLEHGKAGGGSTGRADDGGGGGGFHARLVHQGAAHAGAAWAQGGTAHHLGPAMSPSPGAGGGHQPQPLGLYAQAAYPGGGGGGLAGMLAAGGGGAGPGLHHALHEDGHEAQLEPSPPPHLGAHGHAHGHAHAGGLHAAAAHLHPGAGGGGSSVGEHSDEDAPSSDDLEQFAKQFKQRRIKLGFTQADVGLALGTLYGNVFSQTTICRFEALQLSFKNMCKLKPLLNKWLEETDSSSGSPTNLDKIAAQGRKRKKRTSIEVGVKGALESHFLKCPKPSAHEITGLADSLQLEKEVVRVWFCNRRQKEKRMTPAAGAGHPPMDDVYAPGELGPGGGSASPPSAPPPPPPAALHHHHHHTLPGSVQ.

5 disordered regions span residues 1–21 (MATTAQYLPRGPGGGAGGTGP), 69–114 (AHPQ…GFHA), 134–154 (AHHLGPAMSPSPGAGGGHQPQ), 186–253 (GLHH…PSSD), and 395–451 (KRMT…GSVQ). Gly residues-rich tracts occupy residues 11 to 20 (GPGGGAGGTG), 76 to 85 (TGGGGGGDWA), and 95 to 112 (AGGGSTGRADDGGGGGGF). A compositionally biased stretch (low complexity) spans 134 to 145 (AHHLGPAMSPSP). Positions 190-199 (ALHEDGHEAQ) are enriched in basic and acidic residues. A compositionally biased stretch (low complexity) spans 220–232 (AGGLHAAAAHLHP). Residues 247–321 (EDAPSSDDLE…LLNKWLEETD (75 aa)) form the POU-specific domain. Positions 339-398 (KRKKRTSIEVGVKGALESHFLKCPKPSAHEITGLADSLQLEKEVVRVWFCNRRQKEKRMT) form a DNA-binding region, homeobox. Positions 427–436 (PSAPPPPPPA) are enriched in pro residues.

Belongs to the POU transcription factor family. Class-3 subfamily. Neural tissues and testis.

Its subcellular location is the nucleus. In terms of biological role, transcription factor that binds to the octamer motif (5'-ATTTGCAT-3'). Acts as a transcriptional activator when binding cooperatively with SOX4, SOX11, or SOX12 to gene promoters. Acts as a transcriptional repressor of myelin-specific genes. This is POU domain, class 3, transcription factor 1 (Pou3f1) from Rattus norvegicus (Rat).